We begin with the raw amino-acid sequence, 228 residues long: Small ribosomal subunit protein uS2 (228 aa).

Belongs to the universal ribosomal protein uS2 family.

This is Small ribosomal subunit protein uS2 from Blochmanniella pennsylvanica (strain BPEN).